A 554-amino-acid polypeptide reads, in one-letter code: HMG box-containing protein 4 (554 aa).

3 disordered regions span residues 14–34 (RGMEDVGLAAGRSQREKKRSY), 47–368 (QVRK…SAYQ), and 418–468 (HKQN…SPAK). Polar residues predominate over residues 117–127 (TSPQVDTSTTH). Residues 221–230 (TGREETESRS) show a composition bias toward basic and acidic residues. Polar residues predominate over residues 242–255 (PRSGGTPDSASSTG). A compositionally biased stretch (basic residues) spans 272 to 300 (MKKKKKSKKSKKKKDKHKDEKHRKHSKSK). Pro residues predominate over residues 317–335 (LPSPPPPTATTPTSPPSVP). Residues 342 to 358 (HAEEQLDKKKKKEDPEK) show a composition bias toward basic and acidic residues. Residues 360–428 (KKKNMSAYQV…KQNKAEATTV (69 aa)) constitute a DNA-binding region (HMG box). The segment covering 434–466 (SSESAARSKGSSSGLPSPNKKSPTSVVSFSTSP) has biased composition (low complexity).

In terms of assembly, interacts with nlk.2.

It is found in the nucleus. In terms of biological role, negatively regulates Wnt/beta-catenin signaling during development. This chain is HMG box-containing protein 4 (hmgxb4), found in Xenopus tropicalis (Western clawed frog).